Consider the following 146-residue polypeptide: Ribosome-binding factor A (146 aa).

The disordered stretch occupies residues 125 to 146; it reads RDLDADDDKTKDDRAKDDKDSE.

It belongs to the RbfA family. In terms of assembly, monomer. Binds 30S ribosomal subunits, but not 50S ribosomal subunits or 70S ribosomes.

The protein localises to the cytoplasm. Its function is as follows. One of several proteins that assist in the late maturation steps of the functional core of the 30S ribosomal subunit. Associates with free 30S ribosomal subunits (but not with 30S subunits that are part of 70S ribosomes or polysomes). Required for efficient processing of 16S rRNA. May interact with the 5'-terminal helix region of 16S rRNA. In Mesorhizobium japonicum (strain LMG 29417 / CECT 9101 / MAFF 303099) (Mesorhizobium loti (strain MAFF 303099)), this protein is Ribosome-binding factor A.